The following is a 220-amino-acid chain: Iron-sulfur cluster repair protein YtfE (220 aa).

It belongs to the RIC family. YtfE subfamily. In terms of assembly, homodimer.

The protein localises to the cytoplasm. Di-iron-containing protein involved in the repair of iron-sulfur clusters damaged by oxidative and nitrosative stress conditions. The sequence is that of Iron-sulfur cluster repair protein YtfE from Salmonella typhimurium (strain LT2 / SGSC1412 / ATCC 700720).